The chain runs to 319 residues: Beta-ketoacyl-[acyl-carrier-protein] synthase III (319 aa).

Catalysis depends on residues Cys110 and His246. An ACP-binding region spans residues 247-251 (QANYR). Asn276 is a catalytic residue.

Belongs to the thiolase-like superfamily. FabH family. As to quaternary structure, homodimer.

Its subcellular location is the cytoplasm. The enzyme catalyses malonyl-[ACP] + acetyl-CoA + H(+) = 3-oxobutanoyl-[ACP] + CO2 + CoA. It participates in lipid metabolism; fatty acid biosynthesis. Its function is as follows. Catalyzes the condensation reaction of fatty acid synthesis by the addition to an acyl acceptor of two carbons from malonyl-ACP. Catalyzes the first condensation reaction which initiates fatty acid synthesis and may therefore play a role in governing the total rate of fatty acid production. Possesses both acetoacetyl-ACP synthase and acetyl transacylase activities. Its substrate specificity determines the biosynthesis of branched-chain and/or straight-chain of fatty acids. This chain is Beta-ketoacyl-[acyl-carrier-protein] synthase III, found in Lactobacillus delbrueckii subsp. bulgaricus (strain ATCC BAA-365 / Lb-18).